Consider the following 335-residue polypeptide: Probable cytosolic iron-sulfur protein assembly protein Ciao1 (335 aa).

WD repeat units lie at residues 12–51 (GHKG…WSTK), 57–96 (GHKR…FECN), 101–140 (GHEN…EFEC), 146–185 (PHTQ…NDWD), 192–231 (SHTS…NTAG), 250–289 (QHSR…KPDE), and 301–335 (AHDQ…KVSE).

Belongs to the WD repeat CIA1 family.

Essential component of the cytosolic iron-sulfur (Fe/S) protein assembly machinery. Required for the maturation of extramitochondrial Fe/S proteins. This chain is Probable cytosolic iron-sulfur protein assembly protein Ciao1, found in Drosophila simulans (Fruit fly).